A 90-amino-acid chain; its full sequence is UPF0298 protein YlbG (90 aa).

This sequence belongs to the UPF0298 family.

It localises to the cytoplasm. This is UPF0298 protein YlbG (ylbG) from Bacillus subtilis (strain 168).